The sequence spans 251 residues: 5-oxoprolinase subunit A 2 (251 aa).

Belongs to the LamB/PxpA family. In terms of assembly, forms a complex composed of PxpA, PxpB and PxpC.

It catalyses the reaction 5-oxo-L-proline + ATP + 2 H2O = L-glutamate + ADP + phosphate + H(+). Functionally, catalyzes the cleavage of 5-oxoproline to form L-glutamate coupled to the hydrolysis of ATP to ADP and inorganic phosphate. In Pseudomonas syringae pv. tomato (strain ATCC BAA-871 / DC3000), this protein is 5-oxoprolinase subunit A 2.